The following is a 212-amino-acid chain: Deoxyribose-phosphate aldolase (212 aa).

Asp-89 acts as the Proton donor/acceptor in catalysis. The active-site Schiff-base intermediate with acetaldehyde is the Lys-151. Lys-180 acts as the Proton donor/acceptor in catalysis.

It belongs to the DeoC/FbaB aldolase family. DeoC type 1 subfamily.

The protein localises to the cytoplasm. The catalysed reaction is 2-deoxy-D-ribose 5-phosphate = D-glyceraldehyde 3-phosphate + acetaldehyde. It functions in the pathway carbohydrate degradation; 2-deoxy-D-ribose 1-phosphate degradation; D-glyceraldehyde 3-phosphate and acetaldehyde from 2-deoxy-alpha-D-ribose 1-phosphate: step 2/2. Catalyzes a reversible aldol reaction between acetaldehyde and D-glyceraldehyde 3-phosphate to generate 2-deoxy-D-ribose 5-phosphate. The polypeptide is Deoxyribose-phosphate aldolase (Clostridium botulinum (strain 657 / Type Ba4)).